The sequence spans 384 residues: MAKRDYYEVLGVARGASADEIKKAYRAKAKQLHPDRNKDCKVSEAAFKEVNEAYECLKDDQKKAAYDRFGHAAFENGGGGFGRGNGHGDFGSAFADVFEDLFGDMMGRRAGGGGRSRASRGQDLRYNLRVSLEEAYNGAQKTINVPGSVACAACNGTGAEGAVEPATCPTCSGMGKVRATQGFFTVERTCPTCSGHGQIVKNPCQECRGAGRVQKERTLSVNIPAGVETGTRIRLAGEGDAGMRGGPAGDLYIFIEVREHPIFMRDGRMLACQVPVSMTTAALGGEIEVPTIDGGRSRVKVPPGTQSGKQLRLRGKGMPPLRHGPGLNGEAGDMLIELAVETPVNLTARQKELLREFEAINADNNPQTQGFFQKIKGFWDEMKG.

Positions 5–70 (DYYEVLGVAR…QKKAAYDRFG (66 aa)) constitute a J domain. The CR-type zinc-finger motif lies at 138–216 (GAQKTINVPG…CRGAGRVQKE (79 aa)). Zn(2+) is bound by residues Cys-151, Cys-154, Cys-168, Cys-171, Cys-190, Cys-193, Cys-204, and Cys-207. CXXCXGXG motif repeat units follow at residues 151–158 (CAACNGTG), 168–175 (CPTCSGMG), 190–197 (CPTCSGHG), and 204–211 (CQECRGAG). Residues 300-322 (KVPPGTQSGKQLRLRGKGMPPLR) are disordered.

The protein belongs to the DnaJ family. As to quaternary structure, homodimer. It depends on Zn(2+) as a cofactor.

It is found in the cytoplasm. In terms of biological role, participates actively in the response to hyperosmotic and heat shock by preventing the aggregation of stress-denatured proteins and by disaggregating proteins, also in an autonomous, DnaK-independent fashion. Unfolded proteins bind initially to DnaJ; upon interaction with the DnaJ-bound protein, DnaK hydrolyzes its bound ATP, resulting in the formation of a stable complex. GrpE releases ADP from DnaK; ATP binding to DnaK triggers the release of the substrate protein, thus completing the reaction cycle. Several rounds of ATP-dependent interactions between DnaJ, DnaK and GrpE are required for fully efficient folding. Also involved, together with DnaK and GrpE, in the DNA replication of plasmids through activation of initiation proteins. This chain is Chaperone protein DnaJ, found in Paracoccus denitrificans (strain Pd 1222).